The sequence spans 240 residues: Pyridoxine 5'-phosphate synthase (240 aa).

Position 7 (Asn-7) interacts with 3-amino-2-oxopropyl phosphate. 9–10 (DH) lines the 1-deoxy-D-xylulose 5-phosphate pocket. A 3-amino-2-oxopropyl phosphate-binding site is contributed by Arg-18. His-43 (proton acceptor) is an active-site residue. 1-deoxy-D-xylulose 5-phosphate-binding residues include Arg-45 and His-50. The Proton acceptor role is filled by Glu-70. 1-deoxy-D-xylulose 5-phosphate is bound at residue Thr-100. His-191 functions as the Proton donor in the catalytic mechanism. Residues Gly-192 and 213-214 (GH) each bind 3-amino-2-oxopropyl phosphate.

The protein belongs to the PNP synthase family. Homooctamer; tetramer of dimers.

The protein resides in the cytoplasm. It carries out the reaction 3-amino-2-oxopropyl phosphate + 1-deoxy-D-xylulose 5-phosphate = pyridoxine 5'-phosphate + phosphate + 2 H2O + H(+). The protein operates within cofactor biosynthesis; pyridoxine 5'-phosphate biosynthesis; pyridoxine 5'-phosphate from D-erythrose 4-phosphate: step 5/5. In terms of biological role, catalyzes the complicated ring closure reaction between the two acyclic compounds 1-deoxy-D-xylulose-5-phosphate (DXP) and 3-amino-2-oxopropyl phosphate (1-amino-acetone-3-phosphate or AAP) to form pyridoxine 5'-phosphate (PNP) and inorganic phosphate. The protein is Pyridoxine 5'-phosphate synthase of Cyanothece sp. (strain PCC 7425 / ATCC 29141).